We begin with the raw amino-acid sequence, 329 residues long: Phenylalanine--tRNA ligase alpha subunit (329 aa).

The protein belongs to the class-II aminoacyl-tRNA synthetase family. Phe-tRNA synthetase alpha subunit type 1 subfamily. Tetramer of two alpha and two beta subunits. Requires Mg(2+) as cofactor.

Its subcellular location is the cytoplasm. It catalyses the reaction tRNA(Phe) + L-phenylalanine + ATP = L-phenylalanyl-tRNA(Phe) + AMP + diphosphate + H(+). This Buchnera aphidicola subsp. Schizaphis graminum (strain Sg) protein is Phenylalanine--tRNA ligase alpha subunit (pheS).